The chain runs to 1732 residues: MPGPWGTVYFLGTAQICSFLSSRWNLEGVMNQTDASRPLNWTIRKLCHAAFLPSVRLLKAQKSWIERAFYKRECVHIIPSTKDPHRCCCGRLIGQHVGLTPSISVLQNEKNESRLSRNDIQSEKWSISKHTQLSPTDAFGTIEFQGGGHSNKAMYVRVSFDTKPDLLLHLMTKEWQLELPKLLISVHGGLQNFELQPKLKQVFGKGLIKAAMTTGAWIFTGGVNTGVIRHVGDALKDHASKSRGKICTIGIAPWGIVENQEDLIGRDVVRPYQTMSNPMSKLTVLNSMHSHFILADNGTTGKYGAEVKLRRQLEKHISLQKINTRCLPFFSLDSRLFYSFWGSCQLDPIGIGQGVPVVALIVEGGPNVISIVLEYLRDTPPVPVVVCDGSGRASDILAFGHKYSEEGGLINESLRDQLLVTIQKTFTYTRTQAQHLFIILMECMKKKELITVFRMGSEGHQDIDLAILTALLKGANASAPDQLSLALAWNRVDIARSQIFIYGQQWPVGSLEQAMLDALVLDRVDFVKLLIENGVSMHRFLTISRLEELYNTRHGPSNTLYHLVRDVKKGNLPPDYRISLIDIGLVIEYLMGGAYRCNYTRKRFRTLYHNLFGPKRPKALKLLGMEDDIPLRRGRKTTKKREEEVDIDLDDPEINHFPFPFHELMVWAVLMKRQKMALFFWQHGEEAMAKALVACKLCKAMAHEASENDMVDDISQELNHNSRDFGQLAVELLDQSYKQDEQLAMKLLTYELKNWSNATCLQLAVAAKHRDFIAHTCSQMLLTDMWMGRLRMRKNSGLKVILGILLPPSILSLEFKNKDDMPYMTQAQEIHLQEKEPEEPEKPTKEKDEEDMELTAMLGRSNGESSRKKDEEEVQSRHRLIPVGRKIYEFYNAPIVKFWFYTLAYIGYLMLFNYIVLVKMERWPSTQEWIVISYIFTLGIEKMREILMSEPGKLLQKVKVWLQEYWNVTDLIAILLFSVGMILRLQDQPFRSDGRVIYCVNIIYWYIRLLDIFGVNKYLGPYVMMIGKMMIDMMYFVIIMLVVLMSFGVARQAILFPNEEPSWKLAKNIFYMPYWMIYGEVFADQIDPPCGQNETREDGKTIQLPPCKTGAWIVPAIMACYLLVANILLVNLLIAVFNNTFFEVKSISNQVWKFQRYQLIMTFHERPVLPPPLIIFSHMTMIFQHVCCRWRKHESDQDERDYGLKLFITDDELKKVHDFEEQCIEEYFREKDDRFNSSNDERIRVTSERVENMSMRLEEVNEREHSMKASLQTVDIRLAQLEDLIGRMATALERLTGLERAESNKIRSRTSSDCTDAAYIVRQSSFNSQEGNTFKLQESIDPAGEETISPTSPTLMPRMRSHSFYSVNVKDKGGIEKLESIFKERSLSLHRATSSHSVAKEPKAPAAPANTLAIVPDSRRPSSCIDIYVSAMDELHCDIEPLDNSMNILGLGEPSFSALAPSTTPSSSAYATLAPTDRPPSRSIDFEDLTSMDTRSFSSDYTHLPECQNPWDTDPPTYHTIERSKSSRYLATTPFLLEEAPIVKSHSFMFSPSRSYYANFGVPVKTAEYTSITDCIDTRCVNAPQAIADRATFPGGLGDKVEDLSCCHPEREAELSHPSSDSEENEARGQRAANPISSQEAENADRTLSNNITVPKIERANSYSAEEPNVPYAHTRKSFSISDKLDRQRNTASLRNPFQRSKSSKPEGRGDSLSMRRLSRTSAFHSFESKHN.

At 1 to 894 the chain is on the cytoplasmic side; that stretch reads MPGPWGTVYF…RKIYEFYNAP (894 aa). Calmodulin-binding regions lie at residues 41–64, 192–215, 300–323, 601–624, and 793–816; these read WTIRKLCHAAFLPSVRLLKAQKSW, NFELQPKLKQVFGKGLIKAAMTTG, TGKYGAEVKLRRQLEKHISLQKIN, RKRFRTLYHNLFGPKRPKALKLLG, and RKNSGLKVILGILLPPSILSLEFK. A required for the inhibitory action of G-beta/gamma-subunits of heterotrimeric G-proteins region spans residues 617–625; the sequence is PKALKLLGM. Ser-796 serves as a coordination point for 1,2-dioctanoyl-sn-glycero-3-phospho-(1D-myo-inositol-4,5-bisphosphate). Residues 829–851 are disordered; that stretch reads EIHLQEKEPEEPEKPTKEKDEED. Residues 831 to 847 show a composition bias toward basic and acidic residues; sequence HLQEKEPEEPEKPTKEK. A helical transmembrane segment spans residues 895-918; it reads IVKFWFYTLAYIGYLMLFNYIVLV. The Extracellular segment spans residues 919–925; it reads KMERWPS. A helical transmembrane segment spans residues 926–948; sequence TQEWIVISYIFTLGIEKMREILM. Topologically, residues 949–964 are cytoplasmic; it reads SEPGKLLQKVKVWLQE. Residues 965 to 985 traverse the membrane as a helical segment; it reads YWNVTDLIAILLFSVGMILRL. At 986–989 the chain is on the extracellular side; the sequence is QDQP. A helical membrane pass occupies residues 990 to 1013; that stretch reads FRSDGRVIYCVNIIYWYIRLLDIF. The Cytoplasmic portion of the chain corresponds to 1014 to 1028; sequence GVNKYLGPYVMMIGK. Lys-1017 and Tyr-1018 together coordinate 1,2-dioctanoyl-sn-glycero-3-phospho-(1D-myo-inositol-4,5-bisphosphate). The helical transmembrane segment at 1029 to 1056 threads the bilayer; that stretch reads MMIDMMYFVIIMLVVLMSFGVARQAILF. The Extracellular segment spans residues 1057 to 1073; that stretch reads PNEEPSWKLAKNIFYMP. An intramembrane region (pore-forming) is located at residues 1074–1101; sequence YWMIYGEVFADQIDPPCGQNETREDGKT. The Extracellular portion of the chain corresponds to 1102–1111; it reads IQLPPCKTGA. The chain crosses the membrane as a helical span at residues 1112 to 1137; that stretch reads WIVPAIMACYLLVANILLVNLLIAVF. Over 1138–1732 the chain is Cytoplasmic; it reads NNTFFEVKSI…AFHSFESKHN (595 aa). The segment at 1610–1732 is disordered; sequence EREAELSHPS…AFHSFESKHN (123 aa). Composition is skewed to polar residues over residues 1635–1653 and 1690–1701; these read PISSQEAENADRTLSNNIT and NTASLRNPFQRS.

It belongs to the transient receptor (TC 1.A.4) family. LTrpC subfamily. TRPM3 sub-subfamily. Homotetramer. Interacts with TRPM1; the interaction results in the formation of a heteromultimeric cation channel complex that are functionally different from the homomeric channels.

Its subcellular location is the cell membrane. It carries out the reaction Ca(2+)(in) = Ca(2+)(out). It catalyses the reaction Mn(2+)(in) = Mn(2+)(out). The catalysed reaction is Zn(2+)(in) = Zn(2+)(out). The enzyme catalyses Mg(2+)(in) = Mg(2+)(out). It carries out the reaction Na(+)(in) = Na(+)(out). With respect to regulation, activated by the neurosteroid pregnelonone sulfate (PregS). PregS activates the channel by shifting its current-voltage activation curve toward more negative membrane potentials and also potentiates temperature-induced activation. Activated by heat. Intracellular Ca(2+) inhibits TRPM3 probably via interaction with Ca(2+)/calmodulin. Intracellular Mg(2+) inhibits TRPM3 activity. Both intracellular and extracellular protons block TRPM3 through propable binding sites in the pore region. Positively regulated by phosphoinositide phosphoinositol 4,5-biphosphate (PI(4,5)P2). Strongly inhibited by activation of G(i)-coupled receptors via direct binding with G-beta/gamma-subunits of heterotrimeric G-proteins. Its activity is regulated as follows. Insensitive to pregnenolone sulfate (PregS) or heat. Not inhibited by G-beta/gamma-subunits of heterotrimeric G-proteins. Its function is as follows. Constitutively active, non-selective divalent cation-conducting channel that is permeable to Ca(2+), Mn(2+), and Mg(2+), with a high permeability for Ca(2+). However, can be enhanced by increasing temperature and by ligands, including the endogenous neurosteroid pregnenolone sulfate and sphingosine-1 and suppressed by intracellular Mg(2+). Implicated in a variety of cellular processes, including insulin/peptide secretion, vascular constriction and dilation, noxious heat sensing, inflammatory and spontaneous pain sensitivity. In neurons of the dorsal root ganglia, functions as thermosensitive channel for the detection of noxious heat and spontaneous pain. Suggested to function as an ionotropic steroid receptor in beta-cell, indeed pregnenolone sulfate leads to Ca(2+) influx and enhanced insulin secretion. Mediates Zn(2+) uptake into the lumen of pancreatic beta cell secretory granules, thereby regulating insulin secretion. Forms heteromultimeric ion channels with TRPM1 which are permeable for Ca(2+) and Zn(2+) ions. Exists as multiple splice variants which differ significantly in their biophysical properties. In terms of biological role, displays strongly reduced permeability for divalent cations and high selectivity toward monovalent cations. Functionally, no channel activity. This Mus musculus (Mouse) protein is Transient receptor potential cation channel subfamily M member 3.